A 335-amino-acid polypeptide reads, in one-letter code: MKVEFAPLNIPLARRLQTTAVFQWVFSFLLLAQCCIGIFICLVLARVWLLLALYVLWLYLDWETPQAGGRRWEWVRNWPVWKYFKDYFPIRLVKTCDLDPQHNYIMGFHPHGVLVAGAFGNFCTNYTGFKELFPGLTPYLHILPFWFRCPFFREYIMSVGLVSASKKSVNHVLSKEDGGNVSIIVTGGAEESLDAHPGSLTLNILKRKGFIKVALKRGAYLVPVFSFGENELFQQVSNPKGSLLRCVQERLQRIMGLAMPLFHARGIFQYSFGLMPYRMPIHTVVGRPIPVKETSHPTQEEIESLHQQYLGALQELFEEHKKRYGIPEHESLIFI.

Helical transmembrane passes span 24–44 (WVFSFLLLAQCCIGIFICLVL) and 47–67 (VWLLLALYVLWLYLDWETPQA). Residues Asn-125 and Asn-180 are each glycosylated (N-linked (GlcNAc...) asparagine).

Belongs to the diacylglycerol acyltransferase family.

The protein resides in the endoplasmic reticulum membrane. It carries out the reaction a 2-acylglycerol + an acyl-CoA = a 1,2-diacylglycerol + CoA. It catalyses the reaction a 2-acylglycerol + an acyl-CoA = a 1,2-diacyl-sn-glycerol + CoA. The enzyme catalyses a 2-acylglycerol + an acyl-CoA = a 2,3-diacyl-sn-glycerol + CoA. The catalysed reaction is a 1-acylglycerol + an acyl-CoA = a 1,2-diacylglycerol + CoA. It carries out the reaction a 1-acylglycerol + an acyl-CoA = a 1,3-diacylglycerol + CoA. It catalyses the reaction a 1-acyl-sn-glycerol + an acyl-CoA = a 1,3-diacyl-sn-glycerol + CoA. The enzyme catalyses a 3-acyl-sn-glycerol + an acyl-CoA = a 1,3-diacyl-sn-glycerol + CoA. It participates in glycerolipid metabolism; triacylglycerol biosynthesis. Involved in glycerolipid synthesis and lipid metabolism. Catalyzes the formation of diacylglycerol, the precursor of triacylglycerol, by transferring the acyl chain of a fatty acyl-CoA to a monoacylglycerol, mainly at the sn-1 or sn-3 positions. It uses both sn-2-monoacylglycerol (2-acylglycerol) and sn-1-monoacylglycerol (1-acyl-sn-glycerol) equally well as substrates, and uses sn-3-monoacylglycerol (3-acyl-sn-glycerol) with lower efficiency. The polypeptide is 2-acylglycerol O-acyltransferase 1 (mogat1) (Xenopus laevis (African clawed frog)).